The sequence spans 257 residues: Global transcriptional regulator CodY (257 aa).

Residues 1–155 (MSLLSKTREL…AATVIGMEIL (155 aa)) are GAF domain. The H-T-H motif DNA-binding region spans 203–222 (ASKVADGVGITRSVIVNALR).

It belongs to the CodY family.

The protein localises to the cytoplasm. Its function is as follows. DNA-binding global transcriptional regulator which is involved in the adaptive response to starvation and acts by directly or indirectly controlling the expression of numerous genes in response to nutrient availability. During rapid exponential growth, CodY is highly active and represses genes whose products allow adaptation to nutrient depletion. This Staphylococcus aureus (strain bovine RF122 / ET3-1) protein is Global transcriptional regulator CodY.